Consider the following 213-residue polypeptide: Large ribosomal subunit protein uL1 (213 aa).

It belongs to the universal ribosomal protein uL1 family. Part of the 50S ribosomal subunit.

In terms of biological role, binds directly to 23S rRNA. Probably involved in E site tRNA release. Its function is as follows. Protein L1 is also a translational repressor protein, it controls the translation of its operon by binding to its mRNA. The protein is Large ribosomal subunit protein uL1 of Methanosarcina mazei (strain ATCC BAA-159 / DSM 3647 / Goe1 / Go1 / JCM 11833 / OCM 88) (Methanosarcina frisia).